Here is a 212-residue protein sequence, read N- to C-terminus: Phosphoenolpyruvate guanylyltransferase (212 aa).

T139, G155, and S158 together coordinate phosphoenolpyruvate.

The protein belongs to the CofC family.

It catalyses the reaction phosphoenolpyruvate + GTP + H(+) = enolpyruvoyl-2-diphospho-5'-guanosine + diphosphate. It functions in the pathway cofactor biosynthesis; coenzyme F420 biosynthesis. Guanylyltransferase that catalyzes the activation of phosphoenolpyruvate (PEP) as enolpyruvoyl-2-diphospho-5'-guanosine, via the condensation of PEP with GTP. It is involved in the biosynthesis of coenzyme F420, a hydride carrier cofactor. This Streptomyces coelicolor (strain ATCC BAA-471 / A3(2) / M145) protein is Phosphoenolpyruvate guanylyltransferase.